The sequence spans 100 residues: Thioredoxin (100 aa).

Positions 1 to 100 (MKHITNKAEL…PKNELKELLK (100 aa)) constitute a Thioredoxin domain. Cysteine 29 and cysteine 32 form a disulfide bridge.

It belongs to the thioredoxin family.

Functionally, participates in various redox reactions through the reversible oxidation of its active center dithiol to a disulfide and catalyzes dithiol-disulfide exchange reactions. In Mycoplasmoides gallisepticum (strain R(low / passage 15 / clone 2)) (Mycoplasma gallisepticum), this protein is Thioredoxin (trxA).